Here is a 343-residue protein sequence, read N- to C-terminus: MTITAQEALQRTIDHREIFYDEMLSLMRQIMAGEISPLMTAAIITGLRVKKETIGEITAAATVMRELATKVTVPGPDRNFLDVVGTGGDGANTFNISTTTIFVAAAAGARVAKHGGRSVSSKSGAADVLEALGVKLGLAPEQVAESIEATGIGFMYAPAHHSAMKNVAAVRREMGVRTIFNILGPLTNPASAPNTLMGVFHPDLVGIQARVMQRLGANHVLVVYGMDGMDEVSLGASTMVGELKDGEIREYQIHPEDFGLQMMGTRNLAVESAEQSKATLLGVLDNRPGPAREIVILNAGVALYTANLVDSIAVGIGRARELIESGAARAKLDEFIAFNRKFA.

Residues glycine 85, 88 to 89, threonine 93, 95 to 98, 113 to 121, and alanine 125 contribute to the 5-phospho-alpha-D-ribose 1-diphosphate site; these read GD, NIST, and KHGGRSVSS. Position 85 (glycine 85) interacts with anthranilate. Serine 97 contacts Mg(2+). Residue arginine 171 coordinates anthranilate. Mg(2+) contacts are provided by aspartate 230 and glutamate 231.

The protein belongs to the anthranilate phosphoribosyltransferase family. As to quaternary structure, homodimer. Mg(2+) is required as a cofactor.

It carries out the reaction N-(5-phospho-beta-D-ribosyl)anthranilate + diphosphate = 5-phospho-alpha-D-ribose 1-diphosphate + anthranilate. It participates in amino-acid biosynthesis; L-tryptophan biosynthesis; L-tryptophan from chorismate: step 2/5. Its function is as follows. Catalyzes the transfer of the phosphoribosyl group of 5-phosphorylribose-1-pyrophosphate (PRPP) to anthranilate to yield N-(5'-phosphoribosyl)-anthranilate (PRA). The sequence is that of Anthranilate phosphoribosyltransferase from Aromatoleum aromaticum (strain DSM 19018 / LMG 30748 / EbN1) (Azoarcus sp. (strain EbN1)).